The following is a 395-amino-acid chain: Lipoyl synthase, mitochondrial (395 aa).

Residues 1–14 constitute a mitochondrion transit peptide; the sequence is MISLRSISRSPAVQ. 7 residues coordinate [4Fe-4S] cluster: cysteine 112, cysteine 117, cysteine 123, cysteine 142, cysteine 146, cysteine 149, and serine 357. Residues 127–346 enclose the Radical SAM core domain; it reads KKSEATATIM…RDTALQMGFL (220 aa).

This sequence belongs to the radical SAM superfamily. Lipoyl synthase family. [4Fe-4S] cluster serves as cofactor.

It is found in the mitochondrion. It catalyses the reaction [[Fe-S] cluster scaffold protein carrying a second [4Fe-4S](2+) cluster] + N(6)-octanoyl-L-lysyl-[protein] + 2 oxidized [2Fe-2S]-[ferredoxin] + 2 S-adenosyl-L-methionine + 4 H(+) = [[Fe-S] cluster scaffold protein] + N(6)-[(R)-dihydrolipoyl]-L-lysyl-[protein] + 4 Fe(3+) + 2 hydrogen sulfide + 2 5'-deoxyadenosine + 2 L-methionine + 2 reduced [2Fe-2S]-[ferredoxin]. The protein operates within protein modification; protein lipoylation via endogenous pathway; protein N(6)-(lipoyl)lysine from octanoyl-[acyl-carrier-protein]: step 2/2. Functionally, catalyzes the radical-mediated insertion of two sulfur atoms into the C-6 and C-8 positions of the octanoyl moiety bound to the lipoyl domains of lipoate-dependent enzymes, thereby converting the octanoylated domains into lipoylated derivatives. This is Lipoyl synthase, mitochondrial from Debaryomyces hansenii (strain ATCC 36239 / CBS 767 / BCRC 21394 / JCM 1990 / NBRC 0083 / IGC 2968) (Yeast).